The chain runs to 147 residues: Allograft inflammatory factor 1 (147 aa).

Ser-2 bears the N-acetylserine mark. N6-acetyllysine is present on Lys-11. Position 39 is a phosphoserine (Ser-39). The region spanning 45–80 is the EF-hand 1 domain; it reads SKLEGFKEKYMEFDLNGNGDIDIMSLKRMLEKLGVP. Residues Asp-58, Asn-60, Asn-62, Asp-64, Thr-100, and Asp-105 each coordinate Ca(2+). An EF-hand 2; degenerate domain is found at 81–115; that stretch reads KTHLELKKLIGEVSSGSGETFSYPDFLRMMLGKRS. The segment at 128–147 is disordered; that stretch reads AREKEKPTGPPAKKAISELP.

Homodimer (Potential). Monomer. Interacts with LCP1. Phosphorylated on serine residues. As to expression, detected in T-lymphocytes and peripheral blood mononuclear cells.

The protein localises to the cytoplasm. The protein resides in the cytoskeleton. It is found in the cell projection. Its subcellular location is the ruffle membrane. It localises to the phagocytic cup. In terms of biological role, actin-binding protein that enhances membrane ruffling and RAC activation. Enhances the actin-bundling activity of LCP1. Binds calcium. Plays a role in RAC signaling and in phagocytosis. May play a role in macrophage activation and function. Promotes the proliferation of vascular smooth muscle cells and of T-lymphocytes. Enhances lymphocyte migration. Plays a role in vascular inflammation. The chain is Allograft inflammatory factor 1 (AIF1) from Homo sapiens (Human).